A 431-amino-acid polypeptide reads, in one-letter code: MENKSNSQILFAEAQQYIPGGVNSPVRAFKSVGQEFPRFIKFAKGAYLYDVDWNKYIDYIGSWGPMILGHCDDDVLEAIQCQVKNGLSYGAPCKQEVDLAKKIIELMPNIEQVRFVNSGTEATISAIRLARAYTCRNKIIKFEGCYHGHADEFLVAAGSGALSLGQPNSPGVPEDVVKDTLVASFNDMESIQALFEKYKDEIACIIVEPIAGNMNMIFPQDGFLAKLRAICDQNSSLLIFDEVMTGFRVALGGAQSIYNVKPDLTTLGKVIGGGMPVGAFGGRKEIMQKVSPAGPVYQAGTLSGNPIAMTAGIKTLEKISQPGFFDELGVKAQKLVDGLNEAAKAYDFNFHAKCLGGMFGLFFCSDKIAVNTFVDLGKTNLKMFNQFFAYMLDNGVYLAPSAYEAGFISIAHSDEDIEKTICLAKKFFQEN.

At Lys269 the chain carries N6-(pyridoxal phosphate)lysine.

It belongs to the class-III pyridoxal-phosphate-dependent aminotransferase family. HemL subfamily. In terms of assembly, homodimer. Pyridoxal 5'-phosphate is required as a cofactor.

Its subcellular location is the cytoplasm. The enzyme catalyses (S)-4-amino-5-oxopentanoate = 5-aminolevulinate. It participates in porphyrin-containing compound metabolism; protoporphyrin-IX biosynthesis; 5-aminolevulinate from L-glutamyl-tRNA(Glu): step 2/2. The polypeptide is Glutamate-1-semialdehyde 2,1-aminomutase (Francisella tularensis subsp. holarctica (strain LVS)).